Consider the following 131-residue polypeptide: Small ribosomal subunit protein uS8 (131 aa).

Belongs to the universal ribosomal protein uS8 family. Part of the 30S ribosomal subunit. Contacts proteins S5 and S12.

Its function is as follows. One of the primary rRNA binding proteins, it binds directly to 16S rRNA central domain where it helps coordinate assembly of the platform of the 30S subunit. The sequence is that of Small ribosomal subunit protein uS8 from Nitrosospira multiformis (strain ATCC 25196 / NCIMB 11849 / C 71).